The sequence spans 368 residues: sn-1 linoleoyl-lipid 6-desaturase (368 aa).

Helical transmembrane passes span 47-67 (IILA…DVLW) and 68-88 (MKLL…FNIS). The Histidine box-1 signature appears at 89–93 (HDGNH). Residues 124–129 (HNVLHH) carry the Histidine box-2 motif. 3 helical membrane-spanning segments follow: residues 164–184 (WFIW…DVQT), 204–224 (IATL…IPIA), and 233–253 (VIGA…VFML). The short motif at 305–309 (HHLFP) is the Histidine box-3 element.

The protein belongs to the fatty acid desaturase type 2 family. Requires Fe(2+) as cofactor.

The protein localises to the cell inner membrane. The protein resides in the cellular thylakoid membrane. The catalysed reaction is a 1-[(9Z,12Z)-octadecdienoyl]-2-acyl-glycerolipid + 2 reduced [2Fe-2S]-[ferredoxin] + O2 + 2 H(+) = a 1-[(6Z,9Z,12Z)-octadectrienoyl]-2-acyl-glycerolipid + 2 oxidized [2Fe-2S]-[ferredoxin] + 2 H2O. The protein operates within lipid metabolism; polyunsaturated fatty acid biosynthesis. Activity requires ferredoxin, which is the natural electron donor, or cytochrome b5. In addition, activity is increased in the presence of the intermediate electron donors, NADPH and FADH(2). Its function is as follows. Desaturase involved in fatty acid biosynthesis. Introduces a double bond at carbon 6 of linoleoyl group (18:2) attached to the sn-1 position of the glycerol moiety of membrane glycerolipids, leading to the formation of gamma-linolenic acid (GLA). The polypeptide is sn-1 linoleoyl-lipid 6-desaturase (Arthrospira platensis (Spirulina platensis)).